We begin with the raw amino-acid sequence, 436 residues long: Acetyl-CoA decarbonylase/synthase complex subunit delta 1 (436 aa).

This sequence belongs to the CdhD family. As to quaternary structure, heterodimer of delta and gamma chains. The ACDS complex is made up of alpha, epsilon, beta, gamma and delta chains with a probable stoichiometry of (alpha(2)epsilon(2))(4)-beta(8)-(gamma(1)delta(1))(8) (Potential).

It participates in one-carbon metabolism; methanogenesis from acetate. Functionally, part of a complex that catalyzes the reversible cleavage of acetyl-CoA, allowing growth on acetate as sole source of carbon and energy. Probably maintains the overall quaternary structure of the ACDS complex. This is Acetyl-CoA decarbonylase/synthase complex subunit delta 1 (cdhD1) from Methanosarcina acetivorans (strain ATCC 35395 / DSM 2834 / JCM 12185 / C2A).